Consider the following 220-residue polypeptide: Thiamine-phosphate synthase (220 aa).

4-amino-2-methyl-5-(diphosphooxymethyl)pyrimidine contacts are provided by residues 39–43 (QLRDK) and Asn80. Residues Asp81 and Asp100 each coordinate Mg(2+). Ser119 is a 4-amino-2-methyl-5-(diphosphooxymethyl)pyrimidine binding site. 145–147 (TPT) provides a ligand contact to 2-[(2R,5Z)-2-carboxy-4-methylthiazol-5(2H)-ylidene]ethyl phosphate. Lys148 provides a ligand contact to 4-amino-2-methyl-5-(diphosphooxymethyl)pyrimidine. Gly176 provides a ligand contact to 2-[(2R,5Z)-2-carboxy-4-methylthiazol-5(2H)-ylidene]ethyl phosphate.

The protein belongs to the thiamine-phosphate synthase family. The cofactor is Mg(2+).

The catalysed reaction is 2-[(2R,5Z)-2-carboxy-4-methylthiazol-5(2H)-ylidene]ethyl phosphate + 4-amino-2-methyl-5-(diphosphooxymethyl)pyrimidine + 2 H(+) = thiamine phosphate + CO2 + diphosphate. It carries out the reaction 2-(2-carboxy-4-methylthiazol-5-yl)ethyl phosphate + 4-amino-2-methyl-5-(diphosphooxymethyl)pyrimidine + 2 H(+) = thiamine phosphate + CO2 + diphosphate. The enzyme catalyses 4-methyl-5-(2-phosphooxyethyl)-thiazole + 4-amino-2-methyl-5-(diphosphooxymethyl)pyrimidine + H(+) = thiamine phosphate + diphosphate. It functions in the pathway cofactor biosynthesis; thiamine diphosphate biosynthesis; thiamine phosphate from 4-amino-2-methyl-5-diphosphomethylpyrimidine and 4-methyl-5-(2-phosphoethyl)-thiazole: step 1/1. Its function is as follows. Condenses 4-methyl-5-(beta-hydroxyethyl)thiazole monophosphate (THZ-P) and 2-methyl-4-amino-5-hydroxymethyl pyrimidine pyrophosphate (HMP-PP) to form thiamine monophosphate (TMP). This chain is Thiamine-phosphate synthase, found in Mycobacterium ulcerans (strain Agy99).